Consider the following 957-residue polypeptide: Glycine dehydrogenase (decarboxylating) (957 aa).

N6-(pyridoxal phosphate)lysine is present on Lys-702.

The protein belongs to the GcvP family. As to quaternary structure, the glycine cleavage system is composed of four proteins: P, T, L and H. The cofactor is pyridoxal 5'-phosphate.

The catalysed reaction is N(6)-[(R)-lipoyl]-L-lysyl-[glycine-cleavage complex H protein] + glycine + H(+) = N(6)-[(R)-S(8)-aminomethyldihydrolipoyl]-L-lysyl-[glycine-cleavage complex H protein] + CO2. The glycine cleavage system catalyzes the degradation of glycine. The P protein binds the alpha-amino group of glycine through its pyridoxal phosphate cofactor; CO(2) is released and the remaining methylamine moiety is then transferred to the lipoamide cofactor of the H protein. This Bradyrhizobium sp. (strain ORS 278) protein is Glycine dehydrogenase (decarboxylating).